Here is a 196-residue protein sequence, read N- to C-terminus: MSLVLDPAAQDLLFREARTANTFTDEPVTDEQVQAIYDLVKFGPTAFNQSPLRVVLVRSAEGRERLVQHMAEGNRPKTATAPLVAILAADNEFHEELPALLPHFPQAKDLFFSERPVRESAAGLNAALQAAYFIIGVRAAGLAAGPMTGYDAAGIQKEFLDDDHTPLMVVNIGKPGDDAWFPRSPRLSFDEVITTV.

This sequence belongs to the nitroreductase family. HadB/RutE subfamily. It depends on FMN as a cofactor.

The sequence is that of Putative NADH dehydrogenase/NAD(P)H nitroreductase SGR_2476 from Streptomyces griseus subsp. griseus (strain JCM 4626 / CBS 651.72 / NBRC 13350 / KCC S-0626 / ISP 5235).